A 71-amino-acid polypeptide reads, in one-letter code: HSEGTFSNDYSKYLETQRAQDFVQWLMNSXXXXXXXXHADGTYTSDVSAYLQDQAAKDFITWLKSGQPKQE.

This sequence belongs to the glucagon family.

It is found in the secreted. Plays a key role in glucose metabolism and homeostasis. Regulates blood glucose by increasing gluconeogenesis and decreasing glycolysis. The chain is Pro-glucagon (gcg) from Piaractus mesopotamicus (Small-scaled pacu).